The chain runs to 802 residues: Oleate activated transcription factor 3 (802 aa).

Positions 19–47 (CTNCKKRKSKCDRGKPCSNCTRIGIENSC) form a DNA-binding region, zn(2)-C6 fungal-type. Residues 749–768 (TSQQDSLASAGTNRTNNIAT) are compositionally biased toward polar residues. The interval 749 to 779 (TSQQDSLASAGTNRTNNIATNSGSGDDGGNG) is disordered.

Belongs to the OAF3 family.

The protein localises to the cytoplasm. Its subcellular location is the nucleus. It is found in the mitochondrion. Transcriptional inhibitor with a significantly increased number of target genes in response to oleate. This chain is Oleate activated transcription factor 3 (OAF3), found in Vanderwaltozyma polyspora (strain ATCC 22028 / DSM 70294 / BCRC 21397 / CBS 2163 / NBRC 10782 / NRRL Y-8283 / UCD 57-17) (Kluyveromyces polysporus).